The primary structure comprises 377 residues: Nitric oxide reductase FlRd-NAD(+) reductase (377 aa).

The protein belongs to the FAD-dependent oxidoreductase family. Requires FAD as cofactor.

It localises to the cytoplasm. The catalysed reaction is 2 reduced [nitric oxide reductase rubredoxin domain] + NAD(+) + H(+) = 2 oxidized [nitric oxide reductase rubredoxin domain] + NADH. The protein operates within nitrogen metabolism; nitric oxide reduction. Its function is as follows. One of at least two accessory proteins for anaerobic nitric oxide (NO) reductase. Reduces the rubredoxin moiety of NO reductase. The polypeptide is Nitric oxide reductase FlRd-NAD(+) reductase (Salmonella newport (strain SL254)).